Consider the following 481-residue polypeptide: Tryptophan--tRNA ligase, cytoplasmic (481 aa).

The WHEP-TRS domain occupies 12-68; sequence SPLELFNSIAAQGELVRSLKAGNAPKDEIESAVKMLLSLKMNYKTAMGEEYKAGCPP. The disordered stretch occupies residues 65–85; that stretch reads GCPPGNSTAGSNGDPDATKAS. Residue lysine 158 is modified to N6-succinyllysine. The 'HIGH' region signature appears at 168-177; that stretch reads PSSEAMHLGH. A 'KMSKS' region motif is present at residues 353-357; that stretch reads KMSAS. Residue serine 355 is modified to Phosphoserine.

Belongs to the class-I aminoacyl-tRNA synthetase family. In terms of assembly, homodimer. Interacts with oxidized form of GAPDH. Proteolytic cleavage generates 2 forms; T1-TrpRS and T2-TrpRS.

It localises to the cytoplasm. It carries out the reaction tRNA(Trp) + L-tryptophan + ATP = L-tryptophyl-tRNA(Trp) + AMP + diphosphate + H(+). In terms of biological role, catalyzes the attachment of tryptophan to tRNA(Trp) in a two-step reaction: tryptophan is first activated by ATP to form Trp-AMP and then transferred to the acceptor end of the tRNA(Trp). Could also possess an angiostatic activity. In Rattus norvegicus (Rat), this protein is Tryptophan--tRNA ligase, cytoplasmic.